The following is a 2769-amino-acid chain: Thyroglobulin (2769 aa).

The signal sequence occupies residues 1–19 (MALALWVFGLLDLICLASA). Position 24 is an iodotyrosine; alternate (Tyr24). Tyr24 is modified (sulfotyrosine; alternate). Tyr24 is modified (thyroxine; alternate). Tyr24 carries the post-translational modification Triiodothyronine; alternate. 4 Thyroglobulin type-1 domains span residues 31–92 (LRPC…PAAC), 93–160 (LSFC…PARC), 161–297 (PRSC…RFRC), and 298–358 (PTKC…PPSC). 8 disulfide bridges follow: Cys34/Cys52, Cys63/Cys70, Cys72/Cys92, Cys96/Cys120, Cys131/Cys138, Cys140/Cys160, Cys164/Cys183, and Cys194/Cys235. Residue Tyr108 is modified to Iodotyrosine. The N-linked (GlcNAc...) (complex) asparagine; alternate glycan is linked to Asn110. N-linked (GlcNAc...) (hybrid) asparagine; alternate glycosylation is present at Asn110. Tyr149 carries the post-translational modification Iodotyrosine; alternate. Tyr149 is modified (diiodotyrosine; alternate). Iodotyrosine is present on residues Tyr234 and Tyr258. Cystine bridges form between Cys301–Cys319, Cys330–Cys336, Cys338–Cys358, Cys364–Cys619, Cys408–Cys607, Cys630–Cys635, Cys637–Cys657, Cys661–Cys686, and Cys697–Cys702. N-linked (GlcNAc...) (complex) asparagine; alternate glycosylation is found at Asn483 and Asn495. Asn483 and Asn495 each carry an N-linked (GlcNAc...) (hybrid) asparagine; alternate glycan. 6 Thyroglobulin type-1 domains span residues 604–657 (SQGC…RPRC), 658–725 (PTEC…PKKC), 726–921 (PSPC…VPAC), 922–1073 (PGSC…IPQC), 1074–1145 (PTSC…SAQC), and 1146–1210 (PSLC…QPAC). Iodotyrosine; alternate is present on Tyr703. Tyr703 bears the Thyroxine; alternate mark. The residue at position 703 (Tyr703) is a Triiodothyronine; alternate. Tyr703 carries the diiodotyrosine; alternate modification. Intrachain disulfides connect Cys704/Cys725, Cys729/Cys762, Cys773/Cys898, Cys900/Cys921, Cys925/Cys1031, Cys1042/Cys1049, Cys1051/Cys1073, Cys1077/Cys1108, Cys1126/Cys1145, Cys1149/Cys1169, Cys1181/Cys1188, Cys1190/Cys1210, Cys1215/Cys1264, Cys1231/Cys1245, Cys1306/Cys1356, and Cys1331/Cys1347. An Iodotyrosine modification is found at Tyr784. Residue Asn853 is glycosylated (N-linked (GlcNAc...) (complex) asparagine; alternate). An N-linked (GlcNAc...) (hybrid) asparagine; alternate glycan is attached at Asn853. Tyr866 is subject to Iodotyrosine; alternate. The residue at position 866 (Tyr866) is a Diiodotyrosine; alternate. A Diiodotyrosine modification is found at Tyr883. A glycan (N-linked (GlcNAc...) (complex) asparagine; alternate) is linked at Asn947. A glycan (N-linked (GlcNAc...) (hybrid) asparagine; alternate) is linked at Asn947. Iodotyrosine; alternate is present on Tyr992. Tyr992 bears the Diiodotyrosine; alternate mark. Residue Asn1140 is glycosylated (N-linked (GlcNAc...) (complex) asparagine; alternate). N-linked (GlcNAc...) (hybrid) asparagine; alternate glycosylation occurs at Asn1140. Residue Tyr1310 is modified to Iodotyrosine. Residue Tyr1310 is modified to Thyroxine. A glycan (N-linked (GlcNAc...) (high mannose) asparagine) is linked at Asn1365. 13 cysteine pairs are disulfide-bonded: Cys1441–Cys1461, Cys1464–Cys1475, Cys1478–Cys1492, Cys1495–Cys1512, Cys1516–Cys1525, Cys1545–Cys1567, Cys1605–Cys1629, Cys1609–Cys1615, Cys1641–Cys1664, Cys1726–Cys1751, Cys1730–Cys1736, Cys1735–Cys1836, and Cys1762–Cys1779. Type II repeat units lie at residues 1458–1471 (ALGC…SYFQ), 1472–1488 (DEQC…EQAG), and 1489–1505 (SLAC…VYAG). An Iodotyrosine; alternate modification is found at Tyr1469. Position 1469 is a diiodotyrosine; alternate (Tyr1469). The Thyroglobulin type-1 11 domain occupies 1513 to 1567 (VTDCQKNEVGLQCDQDSQYRASQRDRTSGKAFCVDGEGRRLPWTEAEAPLVDAQC). The Type IIIA repeat unit spans residues 1605–1725 (CLADCALDEA…GASLAEVHLF (121 aa)). Residues 1726 to 1893 (CLLACDHDSC…LFSLQQANLW (168 aa)) form a Type IIIB repeat. Asn1776 carries an N-linked (GlcNAc...) (complex) asparagine; alternate glycan. The N-linked (GlcNAc...) (hybrid) asparagine; alternate glycan is linked to Asn1776. Positions 1827-1842 (MGSRSESMGCRRDTEP) are enriched in basic and acidic residues. Positions 1827 to 1851 (MGSRSESMGCRRDTEPRPASPSETD) are disordered. Residue Asn1870 is glycosylated (N-linked (GlcNAc...) (complex) asparagine; alternate). Residue Asn1870 is glycosylated (N-linked (GlcNAc...) (hybrid) asparagine; alternate). Intrachain disulfides connect Cys1894–Cys1920, Cys1898–Cys1905, Cys1929–Cys1940, Cys1997–Cys2025, Cys2001–Cys2007, Cys2006–Cys2077, and Cys2036–Cys2049. One copy of the Type IIIA repeat lies at 1894 to 1996 (CLSRCAGEPS…DKSISSGFFE (103 aa)). The Type IIIB repeat unit spans residues 1997-2130 (CERLCDMDPC…VGNFSAARDR (134 aa)). N-linked (GlcNAc...) (high mannose) asparagine glycosylation is present at Asn2014. A glycan (N-linked (GlcNAc...) (high mannose) asparagine) is linked at Asn2123. Disulfide bonds link Cys2131–Cys2155, Cys2135–Cys2141, and Cys2164–Cys2173. The Type IIIA repeat unit spans residues 2131–2188 (CLWECSRHQDCLVTTLQTQPGAVRCMFYADTQSCTHSLQAQNCRLLLHEEATYIYRKP). Tyr2185 carries the iodotyrosine modification. The interval 2189–2769 (NIPLPGFGTS…PELASKTYSK (581 aa)) is cholinesterase-like (ChEL). N-linked (GlcNAc...) (complex) asparagine; alternate glycosylation is present at Asn2251. Asn2251 carries an N-linked (GlcNAc...) (hybrid) asparagine; alternate glycan. Residue Asn2296 is glycosylated (N-linked (GlcNAc...) (high mannose) asparagine). Cys2443 and Cys2454 are oxidised to a cystine. Residue Tyr2541 is modified to Thyroxine. Tyr2574 carries the post-translational modification Iodotyrosine; alternate. Tyr2574 carries the post-translational modification Thyroxine; alternate. The residue at position 2574 (Tyr2574) is a Triiodothyronine; alternate. At Tyr2574 the chain carries Diiodotyrosine; alternate. An iodotyrosine mark is found at Tyr2588 and Tyr2618. Residues Cys2592 and Cys2716 are joined by a disulfide bond. At Tyr2698 the chain carries Diiodotyrosine. Residues 2730-2769 (ADETKDGPSADSEEEDQPAGSGLTEDLLGLPELASKTYSK) are disordered. Tyr2767 is subject to Iodotyrosine; alternate. Residue Tyr2767 is modified to Thyroxine; alternate. A Triiodothyronine; alternate modification is found at Tyr2767. Tyr2767 is modified (diiodotyrosine; alternate).

Belongs to the type-B carboxylesterase/lipase family. In terms of assembly, monomer. Homodimer (via ChEL region); occurs in the endoplasmic reticulum and is required for export to the Golgi apparatus. Homooligomer; disulfide-linked; stored in this form in the thyroid follicle lumen. Iodinated on tyrosine residues by TPO. There are 4 pairs of iodinated tyrosines used for coupling: acceptor Tyr-24 is coupled to donor Tyr-149 or Tyr-234, acceptor Tyr-2574 is coupled to donor Tyr-2541, acceptor Tyr-2767 in monomer 1 is coupled to donor Tyr-2767 in monomer 2 and acceptor Tyr-1310 in monomer 1 is coupled to donor Tyr-108 in monomer 2. Post-translationally, sulfated tyrosines are desulfated during iodination. In terms of processing, undergoes sequential proteolysis by cathepsins to release thyroxine (T4) and triiodothyronine (T3) hormones. In the thyroid follicle lumen, cross-linked TG (storage form) is solubilized by limited proteolysis mediated by cathepsins CTSB and/or CTSL. Partially cleaved TG is further processed by CTSK/cathepsin K and/or CTSL resulting in the release of T4. Following endocytosis, further processing occurs leading to the release of T3 and more T4 hormones. As to expression, specifically expressed in the thyroid gland.

The protein resides in the secreted. Functionally, acts as a substrate for the production of iodinated thyroid hormones thyroxine (T4) and triiodothyronine (T3). The synthesis of T3 and T4 involves iodination of selected tyrosine residues of TG/thyroglobulin followed by their oxidative coupling. Following TG re-internalization and lysosomal-mediated proteolysis, T3 and T4 are released from the polypeptide backbone leading to their secretion into the bloodstream. One dimer produces 7 thyroid hormone molecules. This Bos taurus (Bovine) protein is Thyroglobulin (TG).